A 208-amino-acid polypeptide reads, in one-letter code: Transmembrane protein 222 (208 aa).

Residues 1–34 (MAEAEGSSPLLLQPPPPPPRMAEVETPTGAETDM) are disordered. At 1–55 (MAEAEGSSPLLLQPPPPPPRMAEVETPTGAETDMKQYHGSGGVVMDVERSRFPYC) the chain is on the extracellular side. The chain crosses the membrane as a helical span at residues 56–76 (VVWTPIPVLTWFFPIIGHMGI). At 77–164 (CTSAGVIRDF…MRYNNSTNWN (88 aa)) the chain is on the cytoplasmic side. The chain crosses the membrane as a helical span at residues 165 to 185 (MVTLCCFCLIYGKYVSVGAFV). Position 186 (lysine 186) is a topological domain, extracellular. A helical membrane pass occupies residues 187–207 (TWLPFVLLLGIILTVSLVFNL). A topological domain (cytoplasmic) is located at residue arginine 208.

It localises to the membrane. It is found in the cell projection. The protein localises to the dendrite. The polypeptide is Transmembrane protein 222 (Tmem222) (Mus musculus (Mouse)).